We begin with the raw amino-acid sequence, 143 residues long: Large ribosomal subunit protein bL17 (143 aa).

Belongs to the bacterial ribosomal protein bL17 family. As to quaternary structure, part of the 50S ribosomal subunit. Contacts protein L32.

In Chelativorans sp. (strain BNC1), this protein is Large ribosomal subunit protein bL17.